The sequence spans 331 residues: Tetraacyldisaccharide 4'-kinase (331 aa).

An ATP-binding site is contributed by 60–67; the sequence is TVGGTGKT.

This sequence belongs to the LpxK family.

It carries out the reaction a lipid A disaccharide + ATP = a lipid IVA + ADP + H(+). It functions in the pathway glycolipid biosynthesis; lipid IV(A) biosynthesis; lipid IV(A) from (3R)-3-hydroxytetradecanoyl-[acyl-carrier-protein] and UDP-N-acetyl-alpha-D-glucosamine: step 6/6. Its function is as follows. Transfers the gamma-phosphate of ATP to the 4'-position of a tetraacyldisaccharide 1-phosphate intermediate (termed DS-1-P) to form tetraacyldisaccharide 1,4'-bis-phosphate (lipid IVA). The protein is Tetraacyldisaccharide 4'-kinase of Pseudomonas syringae pv. syringae (strain B728a).